The following is a 257-amino-acid chain: Expansin-A10 (257 aa).

An N-terminal signal peptide occupies residues 1 to 18 (MAPCLLLVLFLLPALATG). The region spanning 50 to 163 (GGACGFGDLG…RRVNCLRDGG (114 aa)) is the Expansin-like EG45 domain. The Expansin-like CBD domain maps to 173 to 252 (FFLTVLISNV…EWDFGKTYTG (80 aa)).

It belongs to the expansin family. Expansin A subfamily. As to expression, expressed in panicles and flowers.

It is found in the secreted. It localises to the cell wall. The protein localises to the membrane. Its function is as follows. May cause loosening and extension of plant cell walls by disrupting non-covalent bonding between cellulose microfibrils and matrix glucans. No enzymatic activity has been found. May be required for rapid internodal elongation in deepwater rice during submergence. This is Expansin-A10 (EXPA10) from Oryza sativa subsp. japonica (Rice).